The following is a 94-amino-acid chain: Small ribosomal subunit protein uS17 (94 aa).

The interval 1–22 (MSEQTSAASTTDRGDRKTRRGY) is disordered.

This sequence belongs to the universal ribosomal protein uS17 family. Part of the 30S ribosomal subunit.

One of the primary rRNA binding proteins, it binds specifically to the 5'-end of 16S ribosomal RNA. The protein is Small ribosomal subunit protein uS17 of Kineococcus radiotolerans (strain ATCC BAA-149 / DSM 14245 / SRS30216).